Consider the following 314-residue polypeptide: DNA-directed RNA polymerase subunit alpha (314 aa).

The tract at residues 1–228 (MIEIEKPRIE…EHLNIFVDLT (228 aa)) is alpha N-terminal domain (alpha-NTD). Positions 245–314 (KEKVLEMSIE…DLGLGLRKED (70 aa)) are alpha C-terminal domain (alpha-CTD).

It belongs to the RNA polymerase alpha chain family. Homodimer. The RNAP catalytic core consists of 2 alpha, 1 beta, 1 beta' and 1 omega subunit. When a sigma factor is associated with the core the holoenzyme is formed, which can initiate transcription.

It carries out the reaction RNA(n) + a ribonucleoside 5'-triphosphate = RNA(n+1) + diphosphate. Functionally, DNA-dependent RNA polymerase catalyzes the transcription of DNA into RNA using the four ribonucleoside triphosphates as substrates. This chain is DNA-directed RNA polymerase subunit alpha, found in Macrococcus caseolyticus (strain JCSC5402) (Macrococcoides caseolyticum).